An 876-amino-acid chain; its full sequence is Probable LRR receptor-like protein kinase At1g51890 (876 aa).

Positions 1–19 are cleaved as a signal peptide; sequence MRFLSFLIFVFAVLGLVQA. Over 20–500 the chain is Extracellular; it reads QDQSGFISLD…TGKNSTNVVA (481 aa). N-linked (GlcNAc...) asparagine glycosylation is found at Asn45, Asn90, Asn138, Asn177, Asn251, Asn259, Asn284, Asn290, Asn327, Asn335, Asn397, Asn412, and Asn417. LRR repeat units follow at residues 407–430, 431–453, and 455–476; these read QIIS…SKLT, HLRE…FSDM, and NLTL…ETLQ. Asn455, Asn460, Asn468, Asn481, and Asn494 each carry an N-linked (GlcNAc...) asparagine glycan. The chain crosses the membrane as a helical span at residues 501–521; it reads IAASVASVFAVLVILAIVFVV. Over 522 to 872 the chain is Cytoplasmic; the sequence is IRKKQRTNEA…FSPSSASDFS (351 aa). The residue at position 561 (Thr561) is a Phosphothreonine. Residues 570-842 enclose the Protein kinase domain; that stretch reads KNFERVLGKG…HVVMELNECL (273 aa). ATP-binding positions include 576-584 and Lys597; that span reads LGKGGFGTV. Phosphotyrosine is present on Tyr642. Asp694 functions as the Proton acceptor in the catalytic mechanism. 2 positions are modified to phosphothreonine: Thr729 and Thr734. Tyr742 is subject to Phosphotyrosine.

This sequence belongs to the protein kinase superfamily. Ser/Thr protein kinase family.

The protein localises to the cell membrane. It carries out the reaction L-seryl-[protein] + ATP = O-phospho-L-seryl-[protein] + ADP + H(+). The catalysed reaction is L-threonyl-[protein] + ATP = O-phospho-L-threonyl-[protein] + ADP + H(+). This Arabidopsis thaliana (Mouse-ear cress) protein is Probable LRR receptor-like protein kinase At1g51890.